We begin with the raw amino-acid sequence, 359 residues long: Very-long-chain (3R)-3-hydroxyacyl-CoA dehydratase (359 aa).

At 1-144 (MSALTPHVYW…RKDPFLGLKK (144 aa)) the chain is on the cytoplasmic side. Residues 3-92 (ALTPHVYWAQ…QEEVWWNRLT (90 aa)) enclose the CS domain. Residues 109–133 (LDESDAEMELREKEEKINKVSFESR) adopt a coiled-coil conformation. The helical transmembrane segment at 145–165 (GFLFMYNLVQFLGYSWIFVNM) threads the bilayer. At 166 to 186 (TVRLFILGQDSFYDTFHTIAD) the chain is on the lumenal side. The chain crosses the membrane as a helical span at residues 187-207 (VMYFCQMLAIMEVINPAVGLV). The Cytoplasmic segment spans residues 208–209 (KT). A helical membrane pass occupies residues 210 to 230 (GVMPAFIQVMGRNFILFVIFG). Residues 231–239 (SLEDMQNKP) are Lumenal-facing. A helical transmembrane segment spans residues 240–260 (VVFFVFYLWSTIEIFRYPFYM). The Cytoplasmic portion of the chain corresponds to 261 to 277 (LACIDTEWKLLTWLRYT). Residues 278 to 298 (IWMPLYPLGVLAEAVAVIQSI) traverse the membrane as a helical segment. Residues Y283 and E290 contribute to the active site. Topologically, residues 299-317 (PIFDETKLLSIPLPKATGL) are lumenal. A helical transmembrane segment spans residues 318–338 (SLSFSYILQLYLVVMFLGLFI). At 339–359 (NFRHLFKQRTRRFRTKKRKAN) the chain is on the cytoplasmic side.

It belongs to the very long-chain fatty acids dehydratase HACD family.

The protein resides in the endoplasmic reticulum membrane. The catalysed reaction is a very-long-chain (3R)-3-hydroxyacyl-CoA = a very-long-chain (2E)-enoyl-CoA + H2O. It carries out the reaction (3R)-hydroxyhexadecanoyl-CoA = (2E)-hexadecenoyl-CoA + H2O. It participates in lipid metabolism; fatty acid biosynthesis. In terms of biological role, catalyzes the third of the four reactions of the long-chain fatty acids elongation cycle. This endoplasmic reticulum-bound enzymatic process, allows the addition of two carbons to the chain of long- and very long-chain fatty acids/VLCFAs per cycle. This enzyme catalyzes the dehydration of the 3-hydroxyacyl-CoA intermediate into trans-2,3-enoyl-CoA, within each cycle of fatty acid elongation. Thereby, it participates in the production of VLCFAs of different chain lengths that are involved in multiple biological processes as precursors of membrane lipids and lipid mediators. Involved in Rac1-signaling pathways leading to the modulation of gene expression. The chain is Very-long-chain (3R)-3-hydroxyacyl-CoA dehydratase from Danio rerio (Zebrafish).